Consider the following 317-residue polypeptide: 4-hydroxy-3-methylbut-2-enyl diphosphate reductase (317 aa).

Residue Cys12 participates in [4Fe-4S] cluster binding. (2E)-4-hydroxy-3-methylbut-2-enyl diphosphate is bound by residues His41 and His74. Residues His41 and His74 each coordinate dimethylallyl diphosphate. Isopentenyl diphosphate contacts are provided by His41 and His74. Position 97 (Cys97) interacts with [4Fe-4S] cluster. His125 is a binding site for (2E)-4-hydroxy-3-methylbut-2-enyl diphosphate. Dimethylallyl diphosphate is bound at residue His125. Position 125 (His125) interacts with isopentenyl diphosphate. Glu127 functions as the Proton donor in the catalytic mechanism. Thr168 contributes to the (2E)-4-hydroxy-3-methylbut-2-enyl diphosphate binding site. Cys198 contacts [4Fe-4S] cluster. (2E)-4-hydroxy-3-methylbut-2-enyl diphosphate-binding residues include Ser226, Ser227, Asn228, and Ser270. Dimethylallyl diphosphate is bound by residues Ser226, Ser227, Asn228, and Ser270. Positions 226, 227, 228, and 270 each coordinate isopentenyl diphosphate.

It belongs to the IspH family. Homodimer. Requires [4Fe-4S] cluster as cofactor.

The enzyme catalyses isopentenyl diphosphate + 2 oxidized [2Fe-2S]-[ferredoxin] + H2O = (2E)-4-hydroxy-3-methylbut-2-enyl diphosphate + 2 reduced [2Fe-2S]-[ferredoxin] + 2 H(+). It carries out the reaction dimethylallyl diphosphate + 2 oxidized [2Fe-2S]-[ferredoxin] + H2O = (2E)-4-hydroxy-3-methylbut-2-enyl diphosphate + 2 reduced [2Fe-2S]-[ferredoxin] + 2 H(+). The protein operates within isoprenoid biosynthesis; dimethylallyl diphosphate biosynthesis; dimethylallyl diphosphate from (2E)-4-hydroxy-3-methylbutenyl diphosphate: step 1/1. It participates in isoprenoid biosynthesis; isopentenyl diphosphate biosynthesis via DXP pathway; isopentenyl diphosphate from 1-deoxy-D-xylulose 5-phosphate: step 6/6. Catalyzes the conversion of 1-hydroxy-2-methyl-2-(E)-butenyl 4-diphosphate (HMBPP) into a mixture of isopentenyl diphosphate (IPP) and dimethylallyl diphosphate (DMAPP). Acts in the terminal step of the DOXP/MEP pathway for isoprenoid precursor biosynthesis. In Yersinia enterocolitica serotype O:8 / biotype 1B (strain NCTC 13174 / 8081), this protein is 4-hydroxy-3-methylbut-2-enyl diphosphate reductase.